Consider the following 441-residue polypeptide: AP-2 complex subunit mu (441 aa).

The 267-residue stretch at 174 to 440 folds into the MHD domain; the sequence is RNELFLDVIE…IGRSGLYETR (267 aa).

It belongs to the adapter complexes medium subunit family. As to quaternary structure, adapter protein complex 2 (AP-2) is a heterotetramer composed of two large adaptins (alpha-type subunit and beta-type subunits), a medium adaptin (mu-type subunit AP50) and a small adaptin (sigma-type subunit AP17). In terms of tissue distribution, brain, heart, lung, liver, testis and spleen.

The protein localises to the cell membrane. It is found in the membrane. It localises to the coated pit. Component of the adapter complexes which link clathrin to receptors in coated vesicles. Clathrin-associated protein complexes are believed to interact with the cytoplasmic tails of membrane proteins, leading to their selection and concentration. AP50 is a subunit of the plasma membrane adapter. Essential wnt/egl-20 signaling protein that functions in wnt/egl-20-producing cells. Required for the AP-2 complex-mediated endocytosis of membrane proteins including wntless homolog mig-14 in egl-20-producing cells. During development, regulates the migration of HSN neurons and the left and right Q neuroblasts (QL and QR, respectively) and their descendants, possibly through hox gene and wnt/egl-20 gene target mab-5, and plays a role in establishing ALM and PLM neuronal cell polarity. Regulates AWB sensory neuron cilia membrane expansion during development, potentially via localization of tub-1 and PtdIns(4,5)P2 to the ciliary base. Required for the asymmetric divisions of V5 cells. The sequence is that of AP-2 complex subunit mu (dpy-23) from Caenorhabditis elegans.